Here is a 556-residue protein sequence, read N- to C-terminus: Solute carrier family 22 member 1 (556 aa).

Residues 1–21 (MPTVDDVLEQVGEFGWFQKQA) are Cytoplasmic-facing. Residues 22 to 42 (FLLLCLISASLAPIYVGIVFL) traverse the membrane as a helical segment. At 43–150 (GFTPGHYCQN…LVCGDAWKVD (108 aa)) the chain is on the extracellular side. N-linked (GlcNAc...) asparagine glycosylation is present at Asn71. The helical transmembrane segment at 151 to 171 (LFQSCVNLGFFLGSLVVGYIA) threads the bilayer. The Cytoplasmic segment spans residues 172–177 (DRFGRK). Residues 178–198 (LCLLVTTLVTSVSGVLTAVAP) traverse the membrane as a helical segment. Residues 199 to 211 (DYTSMLLFRLLQG) lie on the Extracellular side of the membrane. A helical transmembrane segment spans residues 212-231 (MVSKGSWVSGYTLITEFVGS). Residues 232–238 (GYRRTTA) are Cytoplasmic-facing. Residues 239–259 (ILYQMAFTVGLVGLAGVAYAI) traverse the membrane as a helical segment. At 260–263 (PDWR) the chain is on the extracellular side. Residues 264 to 284 (WLQLAVSLPTFLFLLYYWFVP) form a helical membrane-spanning segment. Positions 284–288 (PESPR) match the Proline-rich sequence motif. At 285–348 (ESPRWLLSQK…FRTPNLRKHT (64 aa)) the chain is on the cytoplasmic side. Ser334 carries the phosphoserine modification. The chain crosses the membrane as a helical span at residues 349–369 (VILMYLWFSCAVLYQGLIMHV). The Extracellular portion of the chain corresponds to 370–377 (GATGANLY). The chain crosses the membrane as a helical span at residues 378–398 (LDFFYSSLVEFPAAFIILVTI). Topologically, residues 399-403 (DRIGR) are cytoplasmic. Residues 404–424 (IYPIAASNLVTGAACLLMIFI) form a helical membrane-spanning segment. At 425-429 (PHELH) the chain is on the extracellular side. A helical membrane pass occupies residues 430-452 (WLNVTLACLGRMGATIVLQMVCL). Residues 453–465 (VNAELYPTFIRNL) are Cytoplasmic-facing. Residues 466-486 (GMMVCSALCDLGGIFTPFMVF) form a helical membrane-spanning segment. The Extracellular segment spans residues 487–493 (RLMEVWQ). Residues 494-514 (ALPLILFGVLGLTAGAMTLLL) form a helical membrane-spanning segment. Over 515 to 556 (PETKGVALPETIEEAENLGRRKSKAKENTIYLQVQTGKSSST) the chain is Cytoplasmic. At Thr543 the chain carries Phosphothreonine.

Belongs to the major facilitator (TC 2.A.1) superfamily. Organic cation transporter (TC 2.A.1.19) family. Post-translationally, phosphorylated. In terms of tissue distribution, expressed in kidney cortex in S1, S2 segments of renal proximal tubules as well as in kidney medulla. Expressed throughout the liver lobuli, in hepatocytes surrounding the central veins. Expressed in enterocytes of villi and crypts in small intestine. Expressed in brain, in some white matter regions like the corpus callosum and in the granular layer of the cerebellum. Expressed in Sertoli cells in testis. Expressed in colon. Expressed in tracheal and bronchial ciliated epithelium in the respiratory tract. Expressed in spleen, moderately in skin, and weakly in the gastrointestinal tract, lung, thymus, muscle, and prostate. Expressed in kidney cortex and medulla. Expressed in intestine, liver and colon.

It is found in the basolateral cell membrane. Its subcellular location is the apical cell membrane. The protein resides in the lateral cell membrane. The protein localises to the basal cell membrane. It localises to the cell membrane. It catalyses the reaction 1-methylnicotinamide(out) = 1-methylnicotinamide(in). It carries out the reaction dopamine(out) = dopamine(in). The catalysed reaction is serotonin(out) = serotonin(in). The enzyme catalyses (R)-adrenaline(out) = (R)-adrenaline(in). It catalyses the reaction (R)-noradrenaline(out) = (R)-noradrenaline(in). It carries out the reaction histamine(out) = histamine(in). The catalysed reaction is guanidine(out) = guanidine(in). The enzyme catalyses choline(out) = choline(in). It catalyses the reaction acetylcholine(in) = acetylcholine(out). It carries out the reaction thiamine(in) = thiamine(out). The catalysed reaction is agmatine(out) = agmatine(in). The enzyme catalyses putrescine(out) = putrescine(in). It catalyses the reaction spermidine(in) = spermidine(out). It carries out the reaction (R)-carnitine(in) = (R)-carnitine(out). The catalysed reaction is O-isobutanoyl-(R)-carnitine(in) = O-isobutanoyl-(R)-carnitine(out). The enzyme catalyses O-acetyl-(R)-carnitine(in) = O-acetyl-(R)-carnitine(out). It catalyses the reaction O-3-hydroxybutanoyl-(R)-carnitine(in) = O-3-hydroxybutanoyl-(R)-carnitine(out). It carries out the reaction O-propanoyl-(R)-carnitine(in) = O-propanoyl-(R)-carnitine(out). The catalysed reaction is O-butanoyl-(R)-carnitine(in) = O-butanoyl-(R)-carnitine(out). The enzyme catalyses O-2-methylbutanoyl-(R)-carnitine(in) = O-2-methylbutanoyl-(R)-carnitine(out). It catalyses the reaction O-3-methylbutanoyl-(R)-carnitine(in) = O-3-methylbutanoyl-(R)-carnitine(out). It carries out the reaction O-hexanoyl-(R)-carnitine(in) = O-hexanoyl-(R)-carnitine(out). The catalysed reaction is L-histidyl-L-proline diketopiperazine(in) = L-histidyl-L-proline diketopiperazine(out). The enzyme catalyses (R)-salsolinol(in) = (R)-salsolinol(out). It catalyses the reaction prostaglandin F2alpha(out) = prostaglandin F2alpha(in). It carries out the reaction prostaglandin E2(out) = prostaglandin E2(in). With respect to regulation, phosphorylation of the transporter leads to changes in its substrate affinity, resulting in a regulation of the transport activity. In contrast with human ortholog, ASP uptake is stimulated by protein kinase A (PKA) and C (PKC) and endogenous tyrosine kinase activation. ASP affinity is induced by PKC-dependent phosphorylation. Inhibited by cGMP, most likely through a cGMP-binding protein that interacts with OCT1. In terms of biological role, electrogenic voltage-dependent transporter that mediates the transport of a variety of organic cations such as endogenous bioactive amines, cationic drugs and xenobiotics. Functions as a pH- and Na(+)-independent, bidirectional transporter. Cation cellular uptake or release is driven by the electrochemical potential (i.e. membrane potential and concentration gradient) and substrate selectivity. Hydrophobicity is a major requirement for recognition in polyvalent substrates and inhibitors. Primarily expressed in the basolateral membrane of hepatocytes and proximal tubules and involved in the uptake and disposition of cationic compounds from the blood by hepatic and renal clearance. Most likely functions as an uptake carrier in enterocytes contributing to the intestinal excretion and elimination of organic cations from the systemic circulation. Transports endogenous monoamines such as N-1-methylnicotinamide (NMN), guanidine, neurotransmitters dopamine, serotonin, noradrenaline, adrenaline and histamine, and quaternary ammonium compound such as choline. Also transports natural polyamines such as spermidine, agmatine and putrescine at low affinity, but relatively high turnover. Involved in the hepatic uptake of vitamin B1/thiamine, hence regulating hepatic lipid and energy metabolism. Contributes to the influx and efflux of fatty acid carriers carnitines and acylcarnitines across the basolateral membrane of hepatocytes, from the liver to the systemic circulation and inversely and may be involved in regulating the systemic availability of hepatic acylcarnitines. Mediates the bidirectional transport of acetylcholine (ACh) at the apical membrane of ciliated cell in airway epithelium, thereby playing a role in luminal release of ACh from bronchial epithelium. Transports dopaminergic neuromodulators cyclo(his-pro) and salsolinol with lower efficency. Also capable of transporting non-amine endogenous compounds such as prostaglandin E2 (PGE2) and prostaglandin F2-alpha (PGF2-alpha). May contribute to the transport of cationic compounds in testis across the blood-testis-barrier. Also mediates the uptake of xenobiotics tributylmethylammonium (TBuMA), quinidine, N-methyl-quinine (NMQ), N-methyl-quinidine (NMQD) N-(4,4-azo-n-pentyl)-quinuclidine (APQ), azidoprocainamide methoiodide (AMP), N-(4,4-azo-n-pentyl)-21-deoxyajmalinium (APDA) and 4-(4-(dimethylamino)styryl)-N-methylpyridinium (ASP). Functionally, functional isoform capable of transporting TEA. The chain is Solute carrier family 22 member 1 from Rattus norvegicus (Rat).